Here is a 448-residue protein sequence, read N- to C-terminus: Homogentisate 1,2-dioxygenase (448 aa).

The segment at 1-26 (MNMLAPAAKNAFTPASPDRPAYQSGF) is disordered. Histidine 302 acts as the Proton acceptor in catalysis. Positions 345 and 351 each coordinate Fe cation. Homogentisate-binding residues include tyrosine 360 and histidine 381. Histidine 381 contacts Fe cation.

This sequence belongs to the homogentisate dioxygenase family. As to quaternary structure, hexamer; dimer of trimers. Fe cation serves as cofactor.

The enzyme catalyses homogentisate + O2 = 4-maleylacetoacetate + H(+). The protein operates within amino-acid degradation; L-phenylalanine degradation; acetoacetate and fumarate from L-phenylalanine: step 4/6. In terms of biological role, involved in the catabolism of homogentisate (2,5-dihydroxyphenylacetate or 2,5-OH-PhAc), a central intermediate in the degradation of phenylalanine and tyrosine. Catalyzes the oxidative ring cleavage of the aromatic ring of homogentisate to yield maleylacetoacetate. The chain is Homogentisate 1,2-dioxygenase from Ralstonia nicotianae (strain ATCC BAA-1114 / GMI1000) (Ralstonia solanacearum).